The chain runs to 233 residues: Ribonuclease 3 (233 aa).

Positions 4 to 126 (LNKLMERLGH…IVGAIYIDAG (123 aa)) constitute an RNase III domain. Glu39 is a Mg(2+) binding site. Residue Asp43 is part of the active site. Mg(2+) is bound by residues Asp112 and Glu115. The active site involves Glu115. The region spanning 153–222 (DAKSLLQEWL…AKRFLELLDD (70 aa)) is the DRBM domain.

Belongs to the ribonuclease III family. As to quaternary structure, homodimer. Mg(2+) is required as a cofactor.

Its subcellular location is the cytoplasm. The catalysed reaction is Endonucleolytic cleavage to 5'-phosphomonoester.. Its function is as follows. Digests double-stranded RNA. Involved in the processing of primary rRNA transcript to yield the immediate precursors to the large and small rRNAs (23S and 16S). Processes some mRNAs, and tRNAs when they are encoded in the rRNA operon. Processes pre-crRNA and tracrRNA of type II CRISPR loci if present in the organism. The polypeptide is Ribonuclease 3 (Coxiella burnetii (strain RSA 331 / Henzerling II)).